Consider the following 89-residue polypeptide: Mapacalcine (89 aa).

The residue at position 89 (Gln89) is a Glutamine amide.

Homodimer. Contains disulfide bonds which may also be involved in dimerization.

Its function is as follows. Blocks calcium currents via interaction with a yet unknown target protein. Has no effect on L-type, T-type, N-type or P/Q-type voltage-gated calcium channels (VGCC). Has no effect on voltage-gated potassium or chloride channels. Blocks non-L-type VGCC calcium currents in mouse duodenal myocytes (IC(50)=0.2 uM). Blocks calcium influx induced by hypoxia/reoxygenation in rat hepatocytes. This is Mapacalcine from Pione vastifica (Boring sponge).